Reading from the N-terminus, the 100-residue chain is Small ribosomal subunit protein uS14c (100 aa).

Belongs to the universal ribosomal protein uS14 family. Part of the 30S ribosomal subunit.

Its subcellular location is the plastid. The protein resides in the chloroplast. In terms of biological role, binds 16S rRNA, required for the assembly of 30S particles. The polypeptide is Small ribosomal subunit protein uS14c (Oenothera argillicola (Appalachian evening primrose)).